A 360-amino-acid polypeptide reads, in one-letter code: Epoxyqueuosine reductase (360 aa).

Asp142 acts as the Proton donor in catalysis. Residues 187-216 (APTEPVTAHCGSCQACMDVCPTQAIVAPHR) form the 4Fe-4S ferredoxin-type domain. [4Fe-4S] cluster contacts are provided by Cys196, Cys199, Cys202, Cys206, Cys222, Cys249, Cys252, and Cys256.

This sequence belongs to the QueG family. Monomer. Cob(II)alamin serves as cofactor. The cofactor is [4Fe-4S] cluster.

The protein resides in the cytoplasm. The catalysed reaction is epoxyqueuosine(34) in tRNA + AH2 = queuosine(34) in tRNA + A + H2O. It participates in tRNA modification; tRNA-queuosine biosynthesis. Functionally, catalyzes the conversion of epoxyqueuosine (oQ) to queuosine (Q), which is a hypermodified base found in the wobble positions of tRNA(Asp), tRNA(Asn), tRNA(His) and tRNA(Tyr). This chain is Epoxyqueuosine reductase, found in Alicycliphilus denitrificans (strain DSM 14773 / CIP 107495 / K601).